We begin with the raw amino-acid sequence, 548 residues long: Thermosome subunit alpha (548 aa).

The tract at residues 527-548 (TKPEGGQGGGMPGGMGGMDMGM) is disordered. The span at 531-548 (GGQGGGMPGGMGGMDMGM) shows a compositional bias: gly residues.

Belongs to the TCP-1 chaperonin family. Forms a Heterooligomeric complex of two stacked eight-membered rings.

Its function is as follows. Molecular chaperone; binds unfolded polypeptides in vitro, and has a weak ATPase activity. The polypeptide is Thermosome subunit alpha (thsA) (Thermococcus sp. (strain JCM 11816 / KS-1)).